The chain runs to 34 residues: Photosystem II reaction center protein M (34 aa).

A helical membrane pass occupies residues 5 to 25; the sequence is ILALIAIALFISVPTAFLIII.

It belongs to the PsbM family. PSII is composed of 1 copy each of membrane proteins PsbA, PsbB, PsbC, PsbD, PsbE, PsbF, PsbH, PsbI, PsbJ, PsbK, PsbL, PsbM, PsbT, PsbX, PsbY, PsbZ, Psb30/Ycf12, at least 3 peripheral proteins of the oxygen-evolving complex and a large number of cofactors. It forms dimeric complexes.

The protein localises to the plastid. The protein resides in the chloroplast thylakoid membrane. In terms of biological role, one of the components of the core complex of photosystem II (PSII). PSII is a light-driven water:plastoquinone oxidoreductase that uses light energy to abstract electrons from H(2)O, generating O(2) and a proton gradient subsequently used for ATP formation. It consists of a core antenna complex that captures photons, and an electron transfer chain that converts photonic excitation into a charge separation. This subunit is found at the monomer-monomer interface. This chain is Photosystem II reaction center protein M, found in Gnetum parvifolium (Small-leaved jointfir).